Here is a 312-residue protein sequence, read N- to C-terminus: MAAGPNGLEEWVGSAYLFVESSLDKVVLSDAYAHQQQKVAMYGALQTALAESGGSPDVLQMLKIHRSDPQLIVQLRFSGRQACSRFLRAYREGALRATLQGCLARALALNSVPLQLELRAGAEQLDALLTNEERCLNCICAQKPDRLRDEELTELENALRNLTCGSAGGQGSDVQGTPAPLQSLAPSPPEEKPPPPQPGQTFLFQGQPIVNRPLNLQDQQKFARSVGLKWRKVGRSLQRSCRALRDPALDSLAYEYERDGLYEQAFQLLRRFVQAEGRRATLQRLVEALEENELTSLAEDLLGLANPDGSLA.

Residues 147–163 carry the Nuclear export signal motif; the sequence is LRDEELTELENALRNLT. Residues 166 to 200 form a disordered region; it reads SAGGQGSDVQGTPAPLQSLAPSPPEEKPPPPQPGQ. One can recognise a Death domain in the interval 215 to 305; the sequence is NLQDQQKFAR…SLAEDLLGLA (91 aa). The interaction with KRT14 and KRT18 stretch occupies residues 222 to 289; it reads FARSVGLKWR…ATLQRLVEAL (68 aa). The Nuclear localization signal motif lies at 231–244; that stretch reads RKVGRSLQRSCRAL.

In terms of assembly, stimulation of TNF-alpha receptor TNFRSF1A leads to the formation of two distinct signaling complexes. Plasma membrane-bound complex I is composed of TNFRSF1A, TRADD, RIPK1, TRAF2 and BIRC2/c-IAP1 or BIRC3 which interacts with CHUCK/IKK-alpha, IKBKB/IKK-beta and IKBKG/IKK-gamma promoting cell survival. Subsequently, TRADD, RIPK1 and TRAF2 dissociate from TNFRSF1A and form cytoplasmic complex II with FADD and caspase CASP8 promoting cell apoptosis. Within complex I, interacts with TNFRSF1A/TNFR1, TRAF2 and kinase RIPK1. Within complex I, interacts with TRPC4AP; the interaction promotes NF-kappa B activation. UXT1 associates with complex I; the interaction prevents the formation of complex II. Within complex I Interacts with scaffold protein DAB2IP. Interacts with autophagy receptor SQSTM1. Interacts with E3 ligase TRIP12. Interacts with kinase HIPK2. Interacts with keratin KRT14. Interacts with keratin KRT18. Interacts with keratins KRT16 and KRT17. Interacts with FADD. Interacts with TOMM70. Interacts with TMC8; the interaction impairs the formation of complex I and facilites complex II formation.

Its subcellular location is the nucleus. It is found in the cytoplasm. It localises to the cytoskeleton. Functionally, adapter molecule for TNFRSF1A/TNFR1 that specifically associates with the cytoplasmic domain of activated TNFRSF1A/TNFR1 mediating its interaction with FADD. Overexpression of TRADD leads to two major TNF-induced responses, apoptosis and activation of NF-kappa-B. The nuclear form acts as a tumor suppressor by preventing ubiquitination and degradation of isoform p19ARF/ARF of CDKN2A by TRIP12: acts by interacting with TRIP12, leading to disrupt interaction between TRIP12 and isoform p19ARF/ARF of CDKN2A. The sequence is that of Tumor necrosis factor receptor type 1-associated DEATH domain protein from Bos taurus (Bovine).